Consider the following 375-residue polypeptide: Nucleosome assembly protein 1-like 4 (375 aa).

Positions methionine 1–threonine 28 are disordered. Alanine 2 carries the post-translational modification N-acetylalanine. Residues serine 5, serine 7, and serine 49 each carry the phosphoserine modification. Threonine 51 is subject to Phosphothreonine. Serine 53 and serine 54 each carry phosphoserine. At threonine 58 the chain carries Phosphothreonine. Lysine 105 is modified (N6-acetyllysine). Serine 125 is modified (phosphoserine). At lysine 146 the chain carries N6-acetyllysine. A Nuclear localization signal motif is present at residues isoleucine 265 to histidine 271. Residue serine 304 is modified to Phosphoserine. A disordered region spans residues alanine 339–valine 375.

This sequence belongs to the nucleosome assembly protein (NAP) family. Interacts with core (H2A, H2B, H3, H4) and linker (H1) histones. In terms of processing, polyglutamylated and polyglycylated. These 2 modifications occur exclusively on glutamate residues and result in either polyglutamate or polyglycine chains on the gamma-carboxyl group. Both modifications can coexist on the same protein on adjacent residues, and lowering polyglycylation levels increases polyglutamylation, and reciprocally. Polyglutamylated by TTLL4. Phosphorylated at the G0/G1 boundary but it is not phosphorylated in S-phase. Phosphorylated protein remains in the cytoplasm in a complex with histones during the G0/G1 transition, whereas dephosphorylation triggers its transport into the nucleus at the G1/S-boundary.

It is found in the nucleus. The protein resides in the cytoplasm. Acts as a histone chaperone in nucleosome assembly. In condensing spermatids, mediates the loading of the heterodimer composed of histones H2AB1 and H2BC1/TH2B onto the nucleosomes, thereby promoting the replacement of histones to protamine in male germ cells. The chain is Nucleosome assembly protein 1-like 4 (Nap1l4) from Mus musculus (Mouse).